Reading from the N-terminus, the 220-residue chain is MFQGQRGWFCGSVSQDLRQFWVAEGGTISDPRAADFLFSCDASHPDTLRIYQSLDYIEDNATVFHAYYLSAVANAKIKNSVALGHFILPPACLQKEIRRKIGSFIWEQDQHFLIEKHDEVTPNEIKTLRENSELATEHKKELSKSPEKHFIRTPVVEKQMYFPLQNYPVNNMVTGYISIDAMKKFLGELHDFIPGTSGYLAYHVQNEINMSAIKNKLKRK.

The protein belongs to the TERB2 family. Component of the MAJIN-TERB1-TERB2 complex, composed of MAJIN, TERB1 and TERB2.

The protein localises to the chromosome. It localises to the telomere. It is found in the nucleus inner membrane. Functionally, meiosis-specific telomere-associated protein involved in meiotic telomere attachment to the nucleus inner membrane, a crucial step for homologous pairing and synapsis. Component of the MAJIN-TERB1-TERB2 complex, which promotes telomere cap exchange by mediating attachment of telomeric DNA to the inner nuclear membrane and replacement of the protective cap of telomeric chromosomes: in early meiosis, the MAJIN-TERB1-TERB2 complex associates with telomeric DNA and the shelterin/telosome complex. During prophase, the complex matures and promotes release of the shelterin/telosome complex from telomeric DNA. This Homo sapiens (Human) protein is Telomere repeats-binding bouquet formation protein 2 (TERB2).